A 667-amino-acid polypeptide reads, in one-letter code: mRNA cap guanine-N(7) methyltransferase (667 aa).

Positions 1–19 are enriched in basic and acidic residues; that stretch reads MYDPARDSWEERDGDEARS. The interval 1-272 is disordered; sequence MYDPARDSWE…RRRQEERERA (272 aa). The span at 33–52 shows a compositional bias: polar residues; it reads FSSSEQIYGASGENNNTTDL. Residues 72 to 87 show a composition bias toward low complexity; sequence SPPAQSTTQTPPSIST. Residues 88–128 show a composition bias toward polar residues; that stretch reads HVQSPVNPAAQEASNTQSLTSAAQNQSNKSTTTMDNTSGSA. Positions 132 to 142 are enriched in basic and acidic residues; the sequence is PRADPSDKSNR. The span at 147–156 shows a compositional bias: polar residues; sequence ASPTDQNGSQ. A compositionally biased stretch (basic and acidic residues) spans 256-272; the sequence is LVDRETLRRRQEERERA. In terms of domain architecture, mRNA cap 0 methyltransferase spans 309–667; that stretch reads SKIKGLRSFN…FYHAFCFYKV (359 aa). 318–319 is an mRNA binding site; sequence NN. Residues lysine 322, glycine 365, aspartate 389, aspartate 427, 470–472, and tyrosine 475 each bind S-adenosyl-L-methionine; that span reads MFT. A compositionally biased stretch (basic and acidic residues) spans 521–535; it reads KKERQSQAKKEKTDE. Residues 521–547 are disordered; sequence KKERQSQAKKEKTDEAPEDGEVEEDDG. A compositionally biased stretch (acidic residues) spans 536–547; it reads APEDGEVEEDDG.

This sequence belongs to the class I-like SAM-binding methyltransferase superfamily. mRNA cap 0 methyltransferase family.

The protein localises to the nucleus. It carries out the reaction a 5'-end (5'-triphosphoguanosine)-ribonucleoside in mRNA + S-adenosyl-L-methionine = a 5'-end (N(7)-methyl 5'-triphosphoguanosine)-ribonucleoside in mRNA + S-adenosyl-L-homocysteine. Its function is as follows. Responsible for methylating the 5'-cap structure of mRNAs. This is mRNA cap guanine-N(7) methyltransferase (abd1) from Neosartorya fischeri (strain ATCC 1020 / DSM 3700 / CBS 544.65 / FGSC A1164 / JCM 1740 / NRRL 181 / WB 181) (Aspergillus fischerianus).